A 304-amino-acid polypeptide reads, in one-letter code: ATP phosphoribosyltransferase (304 aa).

This sequence belongs to the ATP phosphoribosyltransferase family. Long subfamily. Mg(2+) serves as cofactor.

The protein localises to the cytoplasm. It carries out the reaction 1-(5-phospho-beta-D-ribosyl)-ATP + diphosphate = 5-phospho-alpha-D-ribose 1-diphosphate + ATP. Its pathway is amino-acid biosynthesis; L-histidine biosynthesis; L-histidine from 5-phospho-alpha-D-ribose 1-diphosphate: step 1/9. Its activity is regulated as follows. Feedback inhibited by histidine. In terms of biological role, catalyzes the condensation of ATP and 5-phosphoribose 1-diphosphate to form N'-(5'-phosphoribosyl)-ATP (PR-ATP). Has a crucial role in the pathway because the rate of histidine biosynthesis seems to be controlled primarily by regulation of HisG enzymatic activity. In Xanthomonas euvesicatoria pv. vesicatoria (strain 85-10) (Xanthomonas campestris pv. vesicatoria), this protein is ATP phosphoribosyltransferase.